A 60-amino-acid polypeptide reads, in one-letter code: Large ribosomal subunit protein uL30 (60 aa).

The protein belongs to the universal ribosomal protein uL30 family. As to quaternary structure, part of the 50S ribosomal subunit.

This chain is Large ribosomal subunit protein uL30, found in Desulfitobacterium hafniense (strain DSM 10664 / DCB-2).